The sequence spans 270 residues: Formamidopyrimidine-DNA glycosylase (270 aa).

P2 acts as the Schiff-base intermediate with DNA in catalysis. E3 acts as the Proton donor in catalysis. K58 serves as the catalytic Proton donor; for beta-elimination activity. DNA-binding residues include H91, R110, and R151. The FPG-type zinc-finger motif lies at 236-270 (FVYGRGGEFCKVCGSTLREIRLGQRASVYCPRCQR). Residue R260 is the Proton donor; for delta-elimination activity of the active site.

The protein belongs to the FPG family. Monomer. Zn(2+) serves as cofactor.

It carries out the reaction Hydrolysis of DNA containing ring-opened 7-methylguanine residues, releasing 2,6-diamino-4-hydroxy-5-(N-methyl)formamidopyrimidine.. It catalyses the reaction 2'-deoxyribonucleotide-(2'-deoxyribose 5'-phosphate)-2'-deoxyribonucleotide-DNA = a 3'-end 2'-deoxyribonucleotide-(2,3-dehydro-2,3-deoxyribose 5'-phosphate)-DNA + a 5'-end 5'-phospho-2'-deoxyribonucleoside-DNA + H(+). Involved in base excision repair of DNA damaged by oxidation or by mutagenic agents. Acts as a DNA glycosylase that recognizes and removes damaged bases. Has a preference for oxidized purines, such as 7,8-dihydro-8-oxoguanine (8-oxoG). Has AP (apurinic/apyrimidinic) lyase activity and introduces nicks in the DNA strand. Cleaves the DNA backbone by beta-delta elimination to generate a single-strand break at the site of the removed base with both 3'- and 5'-phosphates. The polypeptide is Formamidopyrimidine-DNA glycosylase (Pseudomonas aeruginosa (strain LESB58)).